The chain runs to 59 residues: Ribosome modulation factor (59 aa).

It belongs to the ribosome modulation factor family.

The protein resides in the cytoplasm. In terms of biological role, during stationary phase, converts 70S ribosomes to an inactive dimeric form (100S ribosomes). This chain is Ribosome modulation factor, found in Aeromonas veronii (strain B565).